We begin with the raw amino-acid sequence, 428 residues long: 3-phosphoshikimate 1-carboxyvinyltransferase (428 aa).

The 3-phosphoshikimate site is built by lysine 20, serine 21, and arginine 25. Lysine 20 serves as a coordination point for phosphoenolpyruvate. The phosphoenolpyruvate site is built by glycine 92 and arginine 120. The 3-phosphoshikimate site is built by serine 166, glutamine 168, aspartate 314, and lysine 341. Glutamine 168 provides a ligand contact to phosphoenolpyruvate. The active-site Proton acceptor is the aspartate 314. Phosphoenolpyruvate-binding residues include arginine 345 and arginine 387.

Belongs to the EPSP synthase family. Monomer.

It is found in the cytoplasm. It carries out the reaction 3-phosphoshikimate + phosphoenolpyruvate = 5-O-(1-carboxyvinyl)-3-phosphoshikimate + phosphate. The protein operates within metabolic intermediate biosynthesis; chorismate biosynthesis; chorismate from D-erythrose 4-phosphate and phosphoenolpyruvate: step 6/7. In terms of biological role, catalyzes the transfer of the enolpyruvyl moiety of phosphoenolpyruvate (PEP) to the 5-hydroxyl of shikimate-3-phosphate (S3P) to produce enolpyruvyl shikimate-3-phosphate and inorganic phosphate. This is 3-phosphoshikimate 1-carboxyvinyltransferase from Listeria innocua serovar 6a (strain ATCC BAA-680 / CLIP 11262).